Consider the following 95-residue polypeptide: Ribosome-binding factor A (95 aa).

Belongs to the RbfA family. As to quaternary structure, interacts with the 30S ribosomal subunit as a monomer, binding in a position overlapping the sites of the A and P site tRNAs, and displacing segments of the 16S rRNA. Probably contacts 16S rRNA and ribosomal protein S9 and S13.

It localises to the cytoplasm. Functionally, one of several proteins that assist in the late maturation steps of the functional core of the 30S ribosomal subunit. Associates with free 30S ribosomal subunits (but not with 30S subunits that are part of 70S ribosomes or polysomes). Required for efficient processing of 16S rRNA. Probably interacts with the 5'-terminal helix region of 16S rRNA, bringing together different domains of the 30S ribosomal subunit which aids assembly. This chain is Ribosome-binding factor A, found in Thermus thermophilus (strain ATCC 27634 / DSM 579 / HB8).